A 267-amino-acid polypeptide reads, in one-letter code: MAAYLVQNQWGGSQATWNPGGLWLIGARDKQNVVALDIKSDDGGKTLKGTMTYNGEGPIGFRGTLSSANNYTVENQWGGTSAPWQPGGVWVLGARDKQNIVAVSIKSNDGGKTLTGTTTYNGEGPIGFKSEVTDGDTYSVENQWGGSAAPWHSGGVWVLGTRGKQNVINVDAKSNDGGKTLSGTMTYNGEGPIGFRGTLTSPDTYTVENQWGGSTAPWNPGGFWMIGARNGQNVVALNVASSDGGKTLAGTMIYNGEGPIGFRARLG.

A run of 4 repeats spans residues 1–66, 67–133, 134–200, and 201–267. The tract at residues 1-267 is 4 X 65 AA tandem repeats; that stretch reads MAAYLVQNQW…GPIGFRARLG (267 aa).

Belongs to the bacterial lectin family.

Functionally, this lectin might have a role in the differentiation of cells. In Myxococcus xanthus, this protein is Myxobacterial hemagglutinin (mbhA).